Here is a 358-residue protein sequence, read N- to C-terminus: Methylthioribose-1-phosphate isomerase (358 aa).

Substrate contacts are provided by residues 54–56 (RGA), Arg-96, and Gln-205. Asp-246 acts as the Proton donor in catalysis. 256–257 (NK) serves as a coordination point for substrate.

The protein belongs to the eIF-2B alpha/beta/delta subunits family. MtnA subfamily.

The enzyme catalyses 5-(methylsulfanyl)-alpha-D-ribose 1-phosphate = 5-(methylsulfanyl)-D-ribulose 1-phosphate. It participates in amino-acid biosynthesis; L-methionine biosynthesis via salvage pathway; L-methionine from S-methyl-5-thio-alpha-D-ribose 1-phosphate: step 1/6. Functionally, catalyzes the interconversion of methylthioribose-1-phosphate (MTR-1-P) into methylthioribulose-1-phosphate (MTRu-1-P). This chain is Methylthioribose-1-phosphate isomerase, found in Pseudomonas paraeruginosa (strain DSM 24068 / PA7) (Pseudomonas aeruginosa (strain PA7)).